The chain runs to 356 residues: Phosphoribosyl pyrophosphate synthase-associated protein 1 (356 aa).

An N-acetylmethionine modification is found at M1. S177 and S215 each carry phosphoserine.

It belongs to the ribose-phosphate pyrophosphokinase family. As to quaternary structure, binds to PRPS1 and PRPS2. As to expression, ubiquitous.

In terms of biological role, seems to play a negative regulatory role in 5-phosphoribose 1-diphosphate synthesis. This is Phosphoribosyl pyrophosphate synthase-associated protein 1 (Prpsap1) from Rattus norvegicus (Rat).